The primary structure comprises 176 residues: NAD(P)H-quinone oxidoreductase subunit 6, chloroplastic (176 aa).

5 helical membrane passes run 10–30, 32–52, 61–81, 92–112, and 152–172; these read FLLV…VLLP, PIYS…FYIL, AQLL…VMFM, LWTV…VSLI, and FFLP…GAIT.

Belongs to the complex I subunit 6 family. As to quaternary structure, NDH is composed of at least 16 different subunits, 5 of which are encoded in the nucleus.

It is found in the plastid. Its subcellular location is the chloroplast thylakoid membrane. It carries out the reaction a plastoquinone + NADH + (n+1) H(+)(in) = a plastoquinol + NAD(+) + n H(+)(out). It catalyses the reaction a plastoquinone + NADPH + (n+1) H(+)(in) = a plastoquinol + NADP(+) + n H(+)(out). Functionally, NDH shuttles electrons from NAD(P)H:plastoquinone, via FMN and iron-sulfur (Fe-S) centers, to quinones in the photosynthetic chain and possibly in a chloroplast respiratory chain. The immediate electron acceptor for the enzyme in this species is believed to be plastoquinone. Couples the redox reaction to proton translocation, and thus conserves the redox energy in a proton gradient. This chain is NAD(P)H-quinone oxidoreductase subunit 6, chloroplastic (ndhG), found in Daucus carota (Wild carrot).